Here is a 711-residue protein sequence, read N- to C-terminus: Catalase HPII (711 aa).

Over residues 1 to 10 (MPSKKTDAPK) the composition is skewed to basic and acidic residues. Positions 1 to 27 (MPSKKTDAPKQSEAAGTQTPDRANTNA) are disordered. Positions 14–27 (AAGTQTPDRANTNA) are enriched in polar residues. Residues H92 and N165 contribute to the active site. Y379 contacts heme.

The protein belongs to the catalase family. HPII subfamily. Heme is required as a cofactor.

The protein resides in the cytoplasm. It carries out the reaction 2 H2O2 = O2 + 2 H2O. Decomposes hydrogen peroxide into water and oxygen; serves to protect cells from the toxic effects of hydrogen peroxide. In Pseudomonas putida (Arthrobacter siderocapsulatus), this protein is Catalase HPII (katE).